A 145-amino-acid chain; its full sequence is Large ribosomal subunit protein bL17 (145 aa).

Residues 123 to 145 (KRVDRKKKDPAKDKTEEKKLATA) are disordered.

The protein belongs to the bacterial ribosomal protein bL17 family. Part of the 50S ribosomal subunit. Contacts protein L32.

The polypeptide is Large ribosomal subunit protein bL17 (Pelagibacter ubique (strain HTCC1062)).